We begin with the raw amino-acid sequence, 400 residues long: Leukosialin (400 aa).

A signal peptide spans 1 to 19; sequence MATLLLLLGVLVVSPDALG. Over 20 to 253 the chain is Extracellular; it reads STTAVQTPTS…PFRNPDENSR (234 aa). Residues T21, T22, T26, and T28 are each glycosylated (O-linked (GalNAc...) threonine). 2 stretches are compositionally biased toward polar residues: residues 21 to 51 and 58 to 112; these read TTAV…SITS and TGDQ…TPHA. Positions 21 to 224 are disordered; it reads TTAVQTPTSG…SSGASGPQVS (204 aa). 2 O-linked (GalNAc...) serine glycosylation sites follow: S29 and S35. O-linked (GalNAc...) threonine glycosylation is present at T36. S37, S41, and S42 each carry an O-linked (GalNAc...) serine glycan. T46 and T47 each carry an O-linked (GalNAc...) threonine glycan. S48 is a glycosylation site (O-linked (GalNAc...) serine). T50, T58, and T69 each carry an O-linked (GalNAc...) threonine glycan. Residues S99 and S103 are each glycosylated (O-linked (GalNAc...) serine). O-linked (GalNAc...) threonine glycosylation is found at T109 and T113. S114 carries an O-linked (GalNAc...) serine glycan. Composition is skewed to polar residues over residues 121–164 and 172–182; these read TANS…SRGT and ATVSLETSKGT. O-linked (GalNAc...) threonine glycans are attached at residues T136, T137, T173, and T178. A compositionally biased stretch (low complexity) spans 196–211; it reads TSTGTTGPPVTMTTGS. Positions 212–224 are enriched in polar residues; sequence LEPSSGASGPQVS. N239 carries N-linked (GlcNAc...) asparagine glycosylation. Residues 254–276 form a helical membrane-spanning segment; it reads GMLPVAVLVALLAVIVLVALLLL. At 277-400 the chain is on the cytoplasmic side; that stretch reads WRRRQKRRTG…EPEGGDGAAP (124 aa). The interval 278 to 308 is required for interaction with EZR, MSN and RDX and for co-localization to microvilli; the sequence is RRRQKRRTGALVLSRGGKRNGVVDAWAGPAQ. The Nuclear localization signal signature appears at 282–296; it reads KRRTGALVLSRGGKR. Position 291 is a phosphoserine (S291). Residues 320–332 are compositionally biased toward gly residues; it reads GGSGGDKGSGFPD. The segment at 320–400 is disordered; the sequence is GGSGGDKGSG…EPEGGDGAAP (81 aa). S336 bears the Phosphoserine mark. The residue at position 341 (T341) is a Phosphothreonine. A Phosphoserine modification is found at S351. S355 carries the phosphoserine; by PKC/PRKCQ modification. Residues S368 and S379 each carry the phosphoserine modification.

As to quaternary structure, interacts with SIGLEC1. In terms of assembly, monomer. Interacts with CTNNB1. Interacts with RDX (via FERM domain), EZR and MSN. Post-translationally, glycosylated; has a high content of sialic acid and O-linked carbohydrate structures. Phosphorylation at Ser-355 is regulated by chemokines, requires its association with ERM proteins (EZR, RDX and MSN) and is essential for its function in the regulation of T-cell trafficking to lymph nodes. In terms of processing, has a high content of sialic acid and O-linked carbohydrate structures. Post-translationally, cleavage by CTSG releases its extracellular domain and triggers its intramembrane proteolysis by gamma-secretase releasing the CD43 cytoplasmic tail chain (CD43-ct) which translocates to the nucleus. Sumoylated. As to expression, cell surface of thymocytes, T-lymphocytes, neutrophils, plasma cells and myelomas.

Its subcellular location is the membrane. It localises to the cell projection. It is found in the microvillus. The protein resides in the uropodium. The protein localises to the nucleus. Its subcellular location is the PML body. Predominant cell surface sialoprotein of leukocytes which regulates multiple T-cell functions, including T-cell activation, proliferation, differentiation, trafficking and migration. Positively regulates T-cell trafficking to lymph-nodes via its association with ERM proteins (EZR, RDX and MSN). Negatively regulates Th2 cell differentiation and predisposes the differentiation of T-cells towards a Th1 lineage commitment. Promotes the expression of IFN-gamma by T-cells during T-cell receptor (TCR) activation of naive cells and induces the expression of IFN-gamma by CD4(+) T-cells and to a lesser extent by CD8(+) T-cells. Plays a role in preparing T-cells for cytokine sensing and differentiation into effector cells by inducing the expression of cytokine receptors IFNGR and IL4R, promoting IFNGR and IL4R signaling and by mediating the clustering of IFNGR with TCR. Acts as a major E-selectin ligand responsible for Th17 cell rolling on activated vasculature and recruitment during inflammation. Mediates Th17 cells, but not Th1 cells, adhesion to E-selectin. Acts as a T-cell counter-receptor for SIGLEC1. Functionally, protects cells from apoptotic signals, promoting cell survival. The polypeptide is Leukosialin (SPN) (Homo sapiens (Human)).